The following is a 501-amino-acid chain: Glucans biosynthesis protein G (501 aa).

The signal sequence occupies residues Met1–Ala25.

The protein belongs to the OpgD/OpgG family.

It is found in the periplasm. It functions in the pathway glycan metabolism; osmoregulated periplasmic glucan (OPG) biosynthesis. Involved in the biosynthesis of osmoregulated periplasmic glucans (OPGs). In Rhodopseudomonas palustris (strain ATCC BAA-98 / CGA009), this protein is Glucans biosynthesis protein G.